A 406-amino-acid polypeptide reads, in one-letter code: Aspartokinase (406 aa).

The ACT domain maps to 342 to 406 (IIGHGIKNDL…LLKISETGHC (65 aa)).

The protein belongs to the aspartokinase family.

It catalyses the reaction L-aspartate + ATP = 4-phospho-L-aspartate + ADP. The protein operates within amino-acid biosynthesis; L-lysine biosynthesis via DAP pathway; (S)-tetrahydrodipicolinate from L-aspartate: step 1/4. It functions in the pathway amino-acid biosynthesis; L-methionine biosynthesis via de novo pathway; L-homoserine from L-aspartate: step 1/3. It participates in amino-acid biosynthesis; L-threonine biosynthesis; L-threonine from L-aspartate: step 1/5. This is Aspartokinase (lysC) from Rickettsia bellii (strain RML369-C).